The sequence spans 416 residues: Serine hydroxymethyltransferase 1 (416 aa).

(6S)-5,6,7,8-tetrahydrofolate contacts are provided by residues L121 and 125–127 (GHL). N6-(pyridoxal phosphate)lysine is present on K229. Residues E245 and 354 to 356 (SPF) each bind (6S)-5,6,7,8-tetrahydrofolate.

Belongs to the SHMT family. As to quaternary structure, homodimer. Requires pyridoxal 5'-phosphate as cofactor.

The protein localises to the cytoplasm. The catalysed reaction is (6R)-5,10-methylene-5,6,7,8-tetrahydrofolate + glycine + H2O = (6S)-5,6,7,8-tetrahydrofolate + L-serine. The protein operates within one-carbon metabolism; tetrahydrofolate interconversion. It participates in amino-acid biosynthesis; glycine biosynthesis; glycine from L-serine: step 1/1. Its function is as follows. Catalyzes the reversible interconversion of serine and glycine with tetrahydrofolate (THF) serving as the one-carbon carrier. This reaction serves as the major source of one-carbon groups required for the biosynthesis of purines, thymidylate, methionine, and other important biomolecules. Also exhibits THF-independent aldolase activity toward beta-hydroxyamino acids, producing glycine and aldehydes, via a retro-aldol mechanism. This Vibrio vulnificus (strain CMCP6) protein is Serine hydroxymethyltransferase 1.